The following is a 547-amino-acid chain: Chaperonin GroEL (547 aa).

Residues Thr-30–Pro-33, Lys-51, Asp-87–Thr-91, Gly-415, Asn-479–Ala-481, and Asp-495 each bind ATP. The interval Ala-524 to Phe-547 is disordered. Residues Ala-535–Phe-547 are compositionally biased toward gly residues.

Belongs to the chaperonin (HSP60) family. In terms of assembly, forms a cylinder of 14 subunits composed of two heptameric rings stacked back-to-back. Interacts with the co-chaperonin GroES.

It is found in the cytoplasm. The catalysed reaction is ATP + H2O + a folded polypeptide = ADP + phosphate + an unfolded polypeptide.. Functionally, together with its co-chaperonin GroES, plays an essential role in assisting protein folding. The GroEL-GroES system forms a nano-cage that allows encapsulation of the non-native substrate proteins and provides a physical environment optimized to promote and accelerate protein folding. This Xylella fastidiosa (strain 9a5c) protein is Chaperonin GroEL.